Consider the following 451-residue polypeptide: Tryptophan biosynthesis protein TrpCF (451 aa).

Residues 1–256 (MQETILNKII…TNIKSLIIGD (256 aa)) are indole-3-glycerol phosphate synthase. Residues 257–451 (NKVCGLTRII…ISLIFKKLTF (195 aa)) are N-(5'-phosphoribosyl)anthranilate isomerase.

In the N-terminal section; belongs to the TrpC family. The protein in the C-terminal section; belongs to the TrpF family. As to quaternary structure, monomer.

It carries out the reaction N-(5-phospho-beta-D-ribosyl)anthranilate = 1-(2-carboxyphenylamino)-1-deoxy-D-ribulose 5-phosphate. The catalysed reaction is 1-(2-carboxyphenylamino)-1-deoxy-D-ribulose 5-phosphate + H(+) = (1S,2R)-1-C-(indol-3-yl)glycerol 3-phosphate + CO2 + H2O. Its pathway is amino-acid biosynthesis; L-tryptophan biosynthesis; L-tryptophan from chorismate: step 3/5. It functions in the pathway amino-acid biosynthesis; L-tryptophan biosynthesis; L-tryptophan from chorismate: step 4/5. In terms of biological role, bifunctional enzyme that catalyzes two sequential steps of tryptophan biosynthetic pathway. The first reaction is catalyzed by the isomerase, coded by the TrpF domain; the second reaction is catalyzed by the synthase, coded by the TrpC domain. The polypeptide is Tryptophan biosynthesis protein TrpCF (trpC) (Buchnera aphidicola subsp. Schizaphis graminum (strain Sg)).